Consider the following 298-residue polypeptide: DDRGK domain-containing protein 1 (298 aa).

Residues 1–21 (MDIVLYFVAVPILIVLIVSAV) form a helical membrane-spanning segment. The Cytoplasmic segment spans residues 22–298 (KVRGKTEEDN…NLIPEIHNTA (277 aa)). The segment at 71 to 149 (NSAYREAADN…EERRKEDKKE (79 aa)) is disordered. Over residues 82–94 (SPVEVEEEYEEAE) the composition is skewed to acidic residues. Residues 110–149 (KLEEKQAKRAQREAELEEREERKRTQELREEERRKEDKKE) show a composition bias toward basic and acidic residues. The UFM1-interacting motif (UFIM) motif lies at 181 to 195 (SFVVEEQGEADELTE). The PCI domain maps to 215–259 (VLLEDLASHFGLRTQDAISRLQDLLSDGSITGVIDDRGKFIFITP).

It belongs to the DDRGK1 family. In terms of assembly, component of the UFM1 ribosome E3 ligase (UREL) complex, composed of ufl1, ddrgk1 and cdk5rap3.

It localises to the endoplasmic reticulum membrane. In terms of biological role, component of the UFM1 ribosome E3 ligase (UREL) complex, a multiprotein complex that catalyzes ufmylation of endoplasmic reticulum-docked proteins. The UREL complex plays a key role in ribosome recycling by mediating mono-ufmylation of the RPL26/uL24 subunit of the 60S ribosome following ribosome dissociation: ufmylation weakens the junction between post-termination 60S subunits and SEC61 translocons, promoting release and recycling of the large ribosomal subunit from the endoplasmic reticulum membrane. Ufmylation of RPL26/uL24 and subsequent 60S ribosome recycling either take place after normal termination of translation or after ribosome stalling during cotranslational translocation at the endoplasmic reticulum. Within the UREL complex, DDRGK1 tethers the complex to the endoplasmic reticulum membrane to restrict its activity to endoplasmic reticulum-docked ribosomes and acts as an ufmylation 'reader': following RPL26/uL24 ufmylation, DDRGK1 specifically binds to ufmylated RPL26/uL24 via its UFIM motif, resulting in stable association between the 60S ribosome and the UREL complex, followed by dissociation of the 60S ribosome subunit from the endoplasmic reticulum membrane. The UREL complex is also involved in reticulophagy in response to endoplasmic reticulum stress by promoting ufmylation of proteins such as CYB5R3 and RPN1, thereby promoting lysosomal degradation of ufmylated proteins. Required for stabilization and ufmylation of ATG9A. In Osmerus mordax (Rainbow smelt), this protein is DDRGK domain-containing protein 1.